Consider the following 329-residue polypeptide: Porphobilinogen deaminase (329 aa).

The residue at position 250 (Cys250) is an S-(dipyrrolylmethanemethyl)cysteine.

Belongs to the HMBS family. As to quaternary structure, monomer. Dipyrromethane serves as cofactor.

The catalysed reaction is 4 porphobilinogen + H2O = hydroxymethylbilane + 4 NH4(+). It participates in porphyrin-containing compound metabolism; protoporphyrin-IX biosynthesis; coproporphyrinogen-III from 5-aminolevulinate: step 2/4. Tetrapolymerization of the monopyrrole PBG into the hydroxymethylbilane pre-uroporphyrinogen in several discrete steps. This is Porphobilinogen deaminase from Burkholderia pseudomallei (strain 668).